The primary structure comprises 1139 residues: DNA-directed RNA polymerase subunit beta (1139 aa).

Residues 1085–1139 (ADTSNRHTPSRPTYESVTSEDLSPSPAFTRVLRTADANASRSLEEDEDEEEEEDF) are disordered. The segment covering 1086–1106 (DTSNRHTPSRPTYESVTSEDL) has biased composition (polar residues). Positions 1128–1139 (EEDEDEEEEEDF) are enriched in acidic residues.

The protein belongs to the RNA polymerase beta chain family. As to quaternary structure, in cyanobacteria the RNAP catalytic core is composed of 2 alpha, 1 beta, 1 beta', 1 gamma and 1 omega subunit. When a sigma factor is associated with the core the holoenzyme is formed, which can initiate transcription.

The catalysed reaction is RNA(n) + a ribonucleoside 5'-triphosphate = RNA(n+1) + diphosphate. In terms of biological role, DNA-dependent RNA polymerase catalyzes the transcription of DNA into RNA using the four ribonucleoside triphosphates as substrates. The sequence is that of DNA-directed RNA polymerase subunit beta from Synechococcus sp. (strain JA-2-3B'a(2-13)) (Cyanobacteria bacterium Yellowstone B-Prime).